Here is a 370-residue protein sequence, read N- to C-terminus: tRNA-specific 2-thiouridylase MnmA (370 aa).

Residues 20 to 27 (GMSGGVDS) and Met-46 each bind ATP. The interaction with target base in tRNA stretch occupies residues 106–108 (NPD). Residue Cys-111 is the Nucleophile of the active site. A disulfide bond links Cys-111 and Cys-207. ATP is bound at residue Gly-135. The tract at residues 157-159 (KDQ) is interaction with tRNA. The active-site Cysteine persulfide intermediate is the Cys-207. Residues 318 to 319 (RY) are interaction with tRNA.

The protein belongs to the MnmA/TRMU family.

The protein resides in the cytoplasm. The catalysed reaction is S-sulfanyl-L-cysteinyl-[protein] + uridine(34) in tRNA + AH2 + ATP = 2-thiouridine(34) in tRNA + L-cysteinyl-[protein] + A + AMP + diphosphate + H(+). Its function is as follows. Catalyzes the 2-thiolation of uridine at the wobble position (U34) of tRNA, leading to the formation of s(2)U34. This Polynucleobacter asymbioticus (strain DSM 18221 / CIP 109841 / QLW-P1DMWA-1) (Polynucleobacter necessarius subsp. asymbioticus) protein is tRNA-specific 2-thiouridylase MnmA.